A 498-amino-acid polypeptide reads, in one-letter code: Aspartyl/glutamyl-tRNA(Asn/Gln) amidotransferase subunit B (498 aa).

The protein belongs to the GatB/GatE family. GatB subfamily. In terms of assembly, heterotrimer of A, B and C subunits.

The enzyme catalyses L-glutamyl-tRNA(Gln) + L-glutamine + ATP + H2O = L-glutaminyl-tRNA(Gln) + L-glutamate + ADP + phosphate + H(+). It carries out the reaction L-aspartyl-tRNA(Asn) + L-glutamine + ATP + H2O = L-asparaginyl-tRNA(Asn) + L-glutamate + ADP + phosphate + 2 H(+). In terms of biological role, allows the formation of correctly charged Asn-tRNA(Asn) or Gln-tRNA(Gln) through the transamidation of misacylated Asp-tRNA(Asn) or Glu-tRNA(Gln) in organisms which lack either or both of asparaginyl-tRNA or glutaminyl-tRNA synthetases. The reaction takes place in the presence of glutamine and ATP through an activated phospho-Asp-tRNA(Asn) or phospho-Glu-tRNA(Gln). This chain is Aspartyl/glutamyl-tRNA(Asn/Gln) amidotransferase subunit B, found in Erythrobacter litoralis (strain HTCC2594).